A 437-amino-acid chain; its full sequence is Putative O-antigen export protein (437 aa).

12 helical membrane passes run 3-23 (VPTH…SIFI), 41-61 (AVFT…FGLG), 81-101 (LVLS…ILIL), 129-149 (VASF…IWFS), 152-172 (KGWV…VFLM), 185-205 (IIFS…ISTL), 231-251 (GGFF…YIVM), 269-289 (TFGL…PVCA), 310-330 (FGFI…DFIV), 332-352 (ILAP…FSFY), 375-395 (LWIS…VGAV), and 398-418 (GLVG…SWWL).

It is found in the cell inner membrane. The protein operates within bacterial outer membrane biogenesis; LPS O-antigen biosynthesis. Functionally, may be involved in the translocation process of the nascent O-polysaccharide molecules and/or its ligation to lipid A core units. The sequence is that of Putative O-antigen export protein (rfbX) from Yersinia pseudotuberculosis.